A 379-amino-acid polypeptide reads, in one-letter code: Queuine tRNA-ribosyltransferase (379 aa).

Catalysis depends on aspartate 94, which acts as the Proton acceptor. Substrate is bound by residues 94–98, aspartate 148, glutamine 191, and glycine 218; that span reads DSGGF. An RNA binding region spans residues 249-255; that stretch reads GVGSPDA. The active-site Nucleophile is the aspartate 268. Residues 273–277 form an RNA binding; important for wobble base 34 recognition region; that stretch reads TRIAR. Residues cysteine 306, cysteine 308, cysteine 311, and histidine 337 each contribute to the Zn(2+) site.

This sequence belongs to the queuine tRNA-ribosyltransferase family. In terms of assembly, homodimer. Within each dimer, one monomer is responsible for RNA recognition and catalysis, while the other monomer binds to the replacement base PreQ1. Zn(2+) is required as a cofactor.

The catalysed reaction is 7-aminomethyl-7-carbaguanine + guanosine(34) in tRNA = 7-aminomethyl-7-carbaguanosine(34) in tRNA + guanine. It functions in the pathway tRNA modification; tRNA-queuosine biosynthesis. Functionally, catalyzes the base-exchange of a guanine (G) residue with the queuine precursor 7-aminomethyl-7-deazaguanine (PreQ1) at position 34 (anticodon wobble position) in tRNAs with GU(N) anticodons (tRNA-Asp, -Asn, -His and -Tyr). Catalysis occurs through a double-displacement mechanism. The nucleophile active site attacks the C1' of nucleotide 34 to detach the guanine base from the RNA, forming a covalent enzyme-RNA intermediate. The proton acceptor active site deprotonates the incoming PreQ1, allowing a nucleophilic attack on the C1' of the ribose to form the product. After dissociation, two additional enzymatic reactions on the tRNA convert PreQ1 to queuine (Q), resulting in the hypermodified nucleoside queuosine (7-(((4,5-cis-dihydroxy-2-cyclopenten-1-yl)amino)methyl)-7-deazaguanosine). This Staphylococcus aureus (strain Mu3 / ATCC 700698) protein is Queuine tRNA-ribosyltransferase.